Consider the following 108-residue polypeptide: Large ribosomal subunit protein uL24 (108 aa).

It belongs to the universal ribosomal protein uL24 family. Part of the 50S ribosomal subunit.

One of two assembly initiator proteins, it binds directly to the 5'-end of the 23S rRNA, where it nucleates assembly of the 50S subunit. Its function is as follows. One of the proteins that surrounds the polypeptide exit tunnel on the outside of the subunit. The polypeptide is Large ribosomal subunit protein uL24 (Mycoplasma mycoides subsp. mycoides SC (strain CCUG 32753 / NCTC 10114 / PG1)).